We begin with the raw amino-acid sequence, 202 residues long: Peptidyl-tRNA hydrolase (202 aa).

Position 19 (Tyr19) interacts with tRNA. His24 (proton acceptor) is an active-site residue. 3 residues coordinate tRNA: Tyr70, Asn72, and Asn118.

The protein belongs to the PTH family. As to quaternary structure, monomer.

It localises to the cytoplasm. It catalyses the reaction an N-acyl-L-alpha-aminoacyl-tRNA + H2O = an N-acyl-L-amino acid + a tRNA + H(+). Functionally, hydrolyzes ribosome-free peptidyl-tRNAs (with 1 or more amino acids incorporated), which drop off the ribosome during protein synthesis, or as a result of ribosome stalling. Its function is as follows. Catalyzes the release of premature peptidyl moieties from peptidyl-tRNA molecules trapped in stalled 50S ribosomal subunits, and thus maintains levels of free tRNAs and 50S ribosomes. This chain is Peptidyl-tRNA hydrolase, found in Prochlorococcus marinus (strain NATL1A).